We begin with the raw amino-acid sequence, 668 residues long: UvrABC system protein B (668 aa).

Residues 25–413 enclose the Helicase ATP-binding domain; that stretch reads NGINTGLQHQ…QNTVQQVIRP (389 aa). An ATP-binding site is contributed by 38–45; that stretch reads GVTGSGKT. Positions 91–114 match the Beta-hairpin motif; it reads YYDYYQPEAYIAASDTYIEKDSSV. The 167-residue stretch at 429–595 folds into the Helicase C-terminal domain; sequence QVEDALSEIN…TIIKNIDDML (167 aa). A UVR domain is found at 629 to 664; it reads TKVIKALEKRMRAYAKELEFEKATTIRDKITEVKQK.

This sequence belongs to the UvrB family. In terms of assembly, forms a heterotetramer with UvrA during the search for lesions. Interacts with UvrC in an incision complex.

The protein resides in the cytoplasm. The UvrABC repair system catalyzes the recognition and processing of DNA lesions. A damage recognition complex composed of 2 UvrA and 2 UvrB subunits scans DNA for abnormalities. Upon binding of the UvrA(2)B(2) complex to a putative damaged site, the DNA wraps around one UvrB monomer. DNA wrap is dependent on ATP binding by UvrB and probably causes local melting of the DNA helix, facilitating insertion of UvrB beta-hairpin between the DNA strands. Then UvrB probes one DNA strand for the presence of a lesion. If a lesion is found the UvrA subunits dissociate and the UvrB-DNA preincision complex is formed. This complex is subsequently bound by UvrC and the second UvrB is released. If no lesion is found, the DNA wraps around the other UvrB subunit that will check the other stand for damage. The sequence is that of UvrABC system protein B from Francisella tularensis subsp. tularensis (strain SCHU S4 / Schu 4).